The chain runs to 447 residues: Putative branched-chain amino acid carrier protein SAB1263c (447 aa).

A run of 12 helical transmembrane segments spans residues 6-26, 40-60, 74-94, 114-134, 143-163, 193-213, 229-249, 290-310, 326-346, 350-370, 382-402, and 417-437; these read WVIGFTLFAMFFGAGNLIFPP, ILAFVLTGIDLPLLGVIVGAL, PKFSILFLIIIYLTIGPLFAI, SSIALFIFTIIYFIVVLYICL, IGSLLTPLLLITILAMIIKGY, GYLTMDAIAAIAFSMIVVNAV, LTAGLIAAVALIFIYISLGYI, LLGIIVALACLTTACGLIGAV, FVLVFILMSFIIANQGLNAVI, IPVLSIVYPVAITVVLLILIA, IPVIIVFILSIFSVISKLGWL, and LEWFPVAIIATILGYLVGIFV.

It belongs to the branched chain amino acid transporter family.

Its subcellular location is the cell membrane. Functionally, component of the transport system for branched-chain amino acids (leucine, isoleucine and valine), which is coupled to a proton motive force (Potential). Contributes to NaCl tolerance. In Staphylococcus aureus (strain bovine RF122 / ET3-1), this protein is Putative branched-chain amino acid carrier protein SAB1263c.